We begin with the raw amino-acid sequence, 1333 residues long: Protein CLASP-1 (1333 aa).

The HEAT 1 repeat unit spans residues 168 to 206 (LIPQLCRLTNDPNSEVRDASTNCLVDLMVFGGKSIIAKI). A compositionally biased stretch (low complexity) spans 269–305 (STTSFTSSARLSTPPRTNAPSLSPSPSTPSPLSLPAA). Residues 269-311 (STTSFTSSARLSTPPRTNAPSLSPSPSTPSPLSLPAANGRSRD) are disordered. A coiled-coil region spans residues 360–389 (SNSDVREKLETANSVLRNANEDWSKRANQL). Disordered stretches follow at residues 579–711 (QKML…HQTP) and 764–792 (TPPK…NSSN). Low complexity predominate over residues 601–611 (NQKQPQQPQQN). The segment covering 612-644 (ISQKFLSQRSASALDNKSQVLSIAKPQQSNPSR) has biased composition (polar residues). Composition is skewed to low complexity over residues 657 to 669 (SSTS…VRSS) and 686 to 707 (TNFN…STST). The HEAT 2 repeat unit spans residues 1266–1304 (VAPCFVSAYDSTSSSVRKCAVFGLVALVQRVGMPRLETH).

Belongs to the CLASP family.

The protein localises to the cytoplasm. The protein resides in the cytoskeleton. Functionally, microtubule plus-end tracking protein that promotes the stabilization of dynamic microtubules. This Caenorhabditis briggsae protein is Protein CLASP-1.